Consider the following 76-residue polypeptide: Potassium/proton antiporter CemA (76 aa).

The chain crosses the membrane as a helical span at residues 35-52 (QILSCLVSIFPVILDTIF).

Belongs to the CemA family.

Its subcellular location is the plastid. It is found in the chloroplast inner membrane. The enzyme catalyses K(+)(in) + H(+)(out) = K(+)(out) + H(+)(in). Its function is as follows. Contributes to K(+)/H(+) antiport activity by supporting proton efflux to control proton extrusion and homeostasis in chloroplasts in a light-dependent manner to modulate photosynthesis. Prevents excessive induction of non-photochemical quenching (NPQ) under continuous-light conditions. Indirectly promotes efficient inorganic carbon uptake into chloroplasts. The protein is Potassium/proton antiporter CemA of Vicia faba (Broad bean).